We begin with the raw amino-acid sequence, 444 residues long: Probable glycolate oxidase iron-sulfur subunit (444 aa).

2 consecutive 4Fe-4S ferredoxin-type domains span residues 14–46 (FKER…GFQE) and 69–100 (EDVE…LLEE). [4Fe-4S] cluster is bound by residues Cys26, Cys29, Cys32, Cys36, Cys78, Cys81, Cys84, and Cys88.

The glycolate oxidase likely consists of several subunits including GlcD and GlcF. [4Fe-4S] cluster is required as a cofactor.

Its subcellular location is the cell membrane. The enzyme catalyses glycolate + A = glyoxylate + AH2. It catalyses the reaction (R)-lactate + A = pyruvate + AH2. Functionally, component of a complex that catalyzes the oxidation of glycolate to glyoxylate. Is also able to oxidize D-lactate ((R)-lactate). Does not link directly to O(2), and 2,6-dichloroindophenol (DCIP) and phenazine methosulfate (PMS) can act as artificial electron acceptors in vitro, but the physiological molecule that functions as primary electron acceptor during glycolate oxidation is unknown. In Bacillus subtilis (strain 168), this protein is Probable glycolate oxidase iron-sulfur subunit (glcF).